The following is a 119-amino-acid chain: Small ribosomal subunit protein bS16 (119 aa).

This sequence belongs to the bacterial ribosomal protein bS16 family.

In Chlamydia felis (strain Fe/C-56) (Chlamydophila felis), this protein is Small ribosomal subunit protein bS16.